Consider the following 237-residue polypeptide: uncharacterized protein (237 aa).

The Response regulatory domain maps to 3–116 (RILLVEDDER…VVMAKIKSVL (114 aa)). A 4-aspartylphosphate modification is found at Asp52. A DNA-binding region (ompR/PhoB-type) is located at residues 131-229 (SRIVELGGLT…IRGQGYQFQV (99 aa)).

In terms of processing, phosphorylated by YvcQ.

It localises to the cytoplasm. Its function is as follows. Member of the two-component regulatory system YvcQ/YvcP. This is an uncharacterized protein from Bacillus subtilis (strain 168).